The sequence spans 130 residues: uncharacterized protein (130 aa).

This is an uncharacterized protein from Acanthamoeba polyphaga mimivirus (APMV).